Here is a 493-residue protein sequence, read N- to C-terminus: UDP-N-acetylmuramoylalanine--D-glutamate ligase (493 aa).

126 to 132 (GTNGKTT) is an ATP binding site.

Belongs to the MurCDEF family.

It localises to the cytoplasm. It catalyses the reaction UDP-N-acetyl-alpha-D-muramoyl-L-alanine + D-glutamate + ATP = UDP-N-acetyl-alpha-D-muramoyl-L-alanyl-D-glutamate + ADP + phosphate + H(+). Its pathway is cell wall biogenesis; peptidoglycan biosynthesis. Its function is as follows. Cell wall formation. Catalyzes the addition of glutamate to the nucleotide precursor UDP-N-acetylmuramoyl-L-alanine (UMA). The polypeptide is UDP-N-acetylmuramoylalanine--D-glutamate ligase (Mycolicibacterium smegmatis (strain ATCC 700084 / mc(2)155) (Mycobacterium smegmatis)).